Consider the following 645-residue polypeptide: MAATASAIRYAPEDPNLPKPWKGLVDSRTGYLYFWNPETNVTQYERPASSAPPKLAAIPVSSSVQTNQQSSSGFNSGKEDDKYGRGSDGPKSDSGSRFNEAGRTGPISSNDAASGLGNASSGGSSARGPPSSAAGNELSPEAYCRKHEITVSGGQVPPPLMSFEATGLPNELLREVYSAGFSAPSPIQAQSWPIAMQNRDIVAIAKTGSGKTLGYLIPGFMHLQRIHNDSRMGPTILVLSPTRELATQIQVEALKFGKSSKISCACLYGGAPKGPQLKEIERGVDIVVATPGRLNDILEMKRISLHQVSYLVLDEADRMLDMGFEPQIRKIVNEVPTKRQTLMYTATWPKEVRKIAADLLVNPAQVNIGNVDELVANKSITQTIEVLAPMEKHSRLEQILRSQEPGSKIIIFCSTKRMCDQLARNLTRTFGAAAIHGDKSQAERDDVLNQFRSGRTPVLVATDVAARGLDVKDIRVVVNYDFPNGVEDYVHRIGRTGRAGATGLAYTFFGDQDAKHASDLIKILEGANQKVPPQVREMATRGGGGMNKFRRWGTPSSGGGGGRGGYGDSGYGGRGESGYGSRGDSGYGGRGDSGGRGSWAPSRDSSGSSGWGRERSRSPERFRGGPPSTSSPPRSFHEAMMMKNR.

Disordered regions lie at residues 1-22 (MAAT…KPWK) and 44-137 (YERP…AGNE). The WW domain occupies 15 to 49 (PNLPKPWKGLVDSRTGYLYFWNPETNVTQYERPAS). A compositionally biased stretch (low complexity) spans 60–72 (VSSSVQTNQQSSS). Over residues 77–91 (GKEDDKYGRGSDGPK) the composition is skewed to basic and acidic residues. Residues 108–136 (SSNDAASGLGNASSGGSSARGPPSSAAGN) show a composition bias toward low complexity. A Q motif motif is present at residues 161–189 (MSFEATGLPNELLREVYSAGFSAPSPIQA). The 175-residue stretch at 192-366 (WPIAMQNRDI…ADLLVNPAQV (175 aa)) folds into the Helicase ATP-binding domain. 205 to 212 (AKTGSGKT) provides a ligand contact to ATP. The short motif at 314-317 (DEAD) is the DEAD box element. Positions 395–539 (RLEQILRSQE…KVPPQVREMA (145 aa)) constitute a Helicase C-terminal domain. Residues 532-645 (PPQVREMATR…FHEAMMMKNR (114 aa)) are disordered. Gly residues predominate over residues 556-597 (SSGGGGGRGGYGDSGYGGRGESGYGSRGDSGYGGRGDSGGRG). Positions 598 to 608 (SWAPSRDSSGS) are enriched in low complexity. Residues 612-623 (GRERSRSPERFR) show a composition bias toward basic and acidic residues. Positions 624 to 634 (GGPPSTSSPPR) are enriched in low complexity.

The protein belongs to the DEAD box helicase family. DDX5/DBP2 subfamily.

It catalyses the reaction ATP + H2O = ADP + phosphate + H(+). The polypeptide is DEAD-box ATP-dependent RNA helicase 46 (RH46) (Arabidopsis thaliana (Mouse-ear cress)).